The primary structure comprises 333 residues: Adenosine deaminase (333 aa).

2 residues coordinate Zn(2+): histidine 12 and histidine 14. Substrate is bound by residues histidine 14, aspartate 16, and glycine 170. Residue histidine 197 coordinates Zn(2+). The active-site Proton donor is the glutamate 200. Aspartate 278 lines the Zn(2+) pocket. Aspartate 279 lines the substrate pocket.

Belongs to the metallo-dependent hydrolases superfamily. Adenosine and AMP deaminases family. Adenosine deaminase subfamily. Zn(2+) is required as a cofactor.

The catalysed reaction is adenosine + H2O + H(+) = inosine + NH4(+). It carries out the reaction 2'-deoxyadenosine + H2O + H(+) = 2'-deoxyinosine + NH4(+). In terms of biological role, catalyzes the hydrolytic deamination of adenosine and 2-deoxyadenosine. This Escherichia coli O139:H28 (strain E24377A / ETEC) protein is Adenosine deaminase.